Consider the following 649-residue polypeptide: Serine/threonine kinase-like domain-containing protein STKLD1 (649 aa).

A compositionally biased stretch (basic and acidic residues) spans 1 to 13 (MLGPESDGRRPTQ). Residues 1 to 23 (MLGPESDGRRPTQGERGPGYPGE) are disordered. The region spanning 28–379 (YQVLYQLNPG…CNQAITSAVL (352 aa)) is the Protein kinase domain. Residues 34 to 42 (LNPGALGVN) and lysine 57 each bind ATP. A disordered region spans residues 621–640 (FSKPGLPPGGSPQPGCTASG).

Belongs to the protein kinase superfamily. Ser/Thr protein kinase family. STKL subfamily.

The chain is Serine/threonine kinase-like domain-containing protein STKLD1 (STKLD1) from Macaca fascicularis (Crab-eating macaque).